The following is an 88-amino-acid chain: Small ribosomal subunit protein uS15c (88 aa).

The protein belongs to the universal ribosomal protein uS15 family. In terms of assembly, part of the 30S ribosomal subunit.

It localises to the plastid. The protein localises to the chloroplast. The polypeptide is Small ribosomal subunit protein uS15c (rps15) (Arabis hirsuta (Hairy rock-cress)).